A 380-amino-acid chain; its full sequence is tRNA-specific 2-thiouridylase MnmA (380 aa).

ATP contacts are provided by residues 25 to 32 and Met-51; that span reads AMSGGVDS. The active-site Nucleophile is Cys-119. A disulfide bridge connects residues Cys-119 and Cys-216. Residue Gly-143 coordinates ATP. Residues 166–168 form an interaction with tRNA region; the sequence is KDQ. Cys-216 serves as the catalytic Cysteine persulfide intermediate. Positions 320–321 are interaction with tRNA; it reads RY.

This sequence belongs to the MnmA/TRMU family.

Its subcellular location is the cytoplasm. The catalysed reaction is S-sulfanyl-L-cysteinyl-[protein] + uridine(34) in tRNA + AH2 + ATP = 2-thiouridine(34) in tRNA + L-cysteinyl-[protein] + A + AMP + diphosphate + H(+). Catalyzes the 2-thiolation of uridine at the wobble position (U34) of tRNA, leading to the formation of s(2)U34. The sequence is that of tRNA-specific 2-thiouridylase MnmA from Deinococcus radiodurans (strain ATCC 13939 / DSM 20539 / JCM 16871 / CCUG 27074 / LMG 4051 / NBRC 15346 / NCIMB 9279 / VKM B-1422 / R1).